Reading from the N-terminus, the 195-residue chain is Iron-sulfur flavoprotein AF_1519 (195 aa).

[4Fe-4S] cluster contacts are provided by Cys-45, Cys-48, Cys-51, and Cys-57.

Belongs to the SsuE family. Isf subfamily. In terms of assembly, homodimer. The cofactor is FMN. [4Fe-4S] cluster is required as a cofactor.

Functionally, redox-active protein probably involved in electron transport. The polypeptide is Iron-sulfur flavoprotein AF_1519 (Archaeoglobus fulgidus (strain ATCC 49558 / DSM 4304 / JCM 9628 / NBRC 100126 / VC-16)).